Here is a 523-residue protein sequence, read N- to C-terminus: Tyrosine-protein kinase transforming protein Src (523 aa).

The tract at residues 1 to 50 (MGSSKSKPKDPSQRRRSLEPPDSTHHGGFPASQTPNKTAAPDTHRTPSRS) is disordered. Residue Gly2 is the site of N-myristoyl glycine; by host attachment. Residues 7 to 25 (KPKDPSQRRRSLEPPDSTH) show a composition bias toward basic and acidic residues. An SH3 domain is found at 71-139 (TSPQRAGALA…PSNYVAPSDS (69 aa)). The 98-residue stretch at 145–242 (WYFGKITRRE…GLCHRLTNVC (98 aa)) folds into the SH2 domain. In terms of domain architecture, Protein kinase spans 264 to 514 (LRLEVKLGQG…TFEYLQAQLL (251 aa)). ATP-binding positions include 270–278 (LGQGYFGEV) and Lys292. The Proton acceptor role is filled by Asp383. At Tyr413 the chain carries Phosphotyrosine; by autocatalysis.

It belongs to the protein kinase superfamily. Tyr protein kinase family. SRC subfamily. In terms of assembly, homodimer. The phosphorylated form is termed pp60v-src.

The catalysed reaction is L-tyrosyl-[protein] + ATP = O-phospho-L-tyrosyl-[protein] + ADP + H(+). Its function is as follows. This phosphoprotein, required for both the initiation and the maintenance of neoplastic transformation, is a protein kinase that catalyzes the phosphorylation of tyrosine residues in vitro. This Gallus gallus (Chicken) protein is Tyrosine-protein kinase transforming protein Src (V-SRC).